Here is a 466-residue protein sequence, read N- to C-terminus: Phosphomethylpyrimidine synthase (466 aa).

Substrate contacts are provided by residues Asn80, Met109, Tyr139, His175, 195–197, 236–239, and Glu275; these read SRG and DSLR. Position 279 (His279) interacts with Zn(2+). Tyr302 lines the substrate pocket. Residue His343 participates in Zn(2+) binding. Positions 423, 426, and 431 each coordinate [4Fe-4S] cluster.

The protein belongs to the ThiC family. Requires [4Fe-4S] cluster as cofactor.

It carries out the reaction 5-amino-1-(5-phospho-beta-D-ribosyl)imidazole + S-adenosyl-L-methionine = 4-amino-2-methyl-5-(phosphooxymethyl)pyrimidine + CO + 5'-deoxyadenosine + formate + L-methionine + 3 H(+). The protein operates within cofactor biosynthesis; thiamine diphosphate biosynthesis. Functionally, catalyzes the synthesis of the hydroxymethylpyrimidine phosphate (HMP-P) moiety of thiamine from aminoimidazole ribotide (AIR) in a radical S-adenosyl-L-methionine (SAM)-dependent reaction. In Synechococcus sp. (strain CC9902), this protein is Phosphomethylpyrimidine synthase.